The chain runs to 131 residues: Large ribosomal subunit protein bL12c (131 aa).

The segment covering 106–125 has biased composition (basic and acidic residues); that stretch reads KDNTNKENSEEIKQQLEEAG. Residues 106-131 form a disordered region; the sequence is KDNTNKENSEEIKQQLEEAGAKVSIK.

It belongs to the bacterial ribosomal protein bL12 family. In terms of assembly, homodimer. Part of the ribosomal stalk of the 50S ribosomal subunit. Forms a multimeric L10(L12)X complex, where L10 forms an elongated spine to which 2 to 4 L12 dimers bind in a sequential fashion. Binds GTP-bound translation factors.

The protein localises to the plastid. The protein resides in the chloroplast. Forms part of the ribosomal stalk which helps the ribosome interact with GTP-bound translation factors. Is thus essential for accurate translation. The sequence is that of Large ribosomal subunit protein bL12c from Gracilaria tenuistipitata var. liui (Red alga).